The primary structure comprises 177 residues: Parathyroid hormone-related protein (177 aa).

Positions 1–24 (MLRRLVQQWSVLVFLLSYSVPSRG) are cleaved as a signal peptide. A propeptide spanning residues 25-34 (RSVEGLGRRL) is cleaved from the precursor. The important for receptor binding stretch occupies residues 57 to 68 (RFFLHHLIAEIH). The interval 74–177 (ATSEVSPNSK…TSLEPSSRTH (104 aa)) is disordered. Polar residues predominate over residues 76 to 90 (SEVSPNSKPAPNTKN). The short motif at 108-129 (TNKVETYKEQPLKTPGKKKKGK) is the Nuclear localization signal element. The segment covering 109 to 118 (NKVETYKEQP) has biased composition (basic and acidic residues). The span at 122–132 (PGKKKKGKPGK) shows a compositional bias: basic residues. A compositionally biased stretch (low complexity) spans 161 to 177 (PHTSPTSTSLEPSSRTH).

Belongs to the parathyroid hormone family. PTHrP interacts with PTH1R (via N-terminal extracellular domain). In terms of processing, there are several secretory forms, including osteostatin, arising from endoproteolytic cleavage of the initial translation product. Each of these secretory forms is believed to have one or more of its own receptors that mediates the normal paracrine, autocrine and endocrine actions.

Its subcellular location is the secreted. It localises to the cytoplasm. The protein resides in the nucleus. In terms of biological role, neuroendocrine peptide which is a critical regulator of cellular and organ growth, development, migration, differentiation and survival and of epithelial calcium ion transport. Acts by binding to its receptor, PTH1R, activating G protein-coupled receptor signaling. Regulates endochondral bone development and epithelial-mesenchymal interactions during the formation of the mammary glands and teeth. Required for skeletal homeostasis. Promotes mammary mesenchyme differentiation and bud outgrowth by modulating mesenchymal cell responsiveness to BMPs. Up-regulates BMPR1A expression in the mammary mesenchyme and this increases the sensitivity of these cells to BMPs and allows them to respond to BMP4 in a paracrine and/or autocrine fashion. BMP4 signaling in the mesenchyme, in turn, triggers epithelial outgrowth and augments MSX2 expression, which causes the mammary mesenchyme to inhibit hair follicle formation within the nipple sheath. Functionally, potent inhibitor of osteoclastic bone resorption. This Rattus norvegicus (Rat) protein is Parathyroid hormone-related protein (Pthlh).